Consider the following 89-residue polypeptide: UPF0367 protein CYA_1023 (89 aa).

Positions 69-89 (TKSGGPGAPGTRPGFLAQLQG) are disordered.

The protein belongs to the UPF0367 family.

The sequence is that of UPF0367 protein CYA_1023 from Synechococcus sp. (strain JA-3-3Ab) (Cyanobacteria bacterium Yellowstone A-Prime).